We begin with the raw amino-acid sequence, 1939 residues long: Myosin-4 (1939 aa).

One can recognise a Myosin N-terminal SH3-like domain in the interval 33 to 82; sequence DAKTSVFVVDPKESYVKAIVQSREGGKVTAKTEAGATVTVKEDQVFSMNP. 2 positions are modified to phosphothreonine: Thr64 and Thr69. Ser79 is subject to Phosphoserine. The Myosin motor domain maps to 86 to 782; it reads DKIEDMAMMT…LLGTLEEMRD (697 aa). Position 130 is an N6,N6,N6-trimethyllysine (Lys130). 179–186 provides a ligand contact to ATP; that stretch reads GESGAGKT. At Tyr389 the chain carries Phosphotyrosine. Residue Thr391 is modified to Phosphothreonine. At Ser392 the chain carries Phosphoserine. The residue at position 419 (Thr419) is a Phosphothreonine. Residue Tyr424 is modified to Phosphotyrosine. Residue Ser625 is modified to Phosphoserine. The tract at residues 659-681 is actin-binding; the sequence is LNKLMTNLRSTHPHFVRCIIPNE. A Pros-methylhistidine modification is found at His757. An actin-binding region spans residues 761–775; sequence KFGHTKVFFKAGLLG. Phosphothreonine is present on Thr776. Residues 785-814 form the IQ domain; that stretch reads LAQLITRTQAICRGFLMRVEFRKMMERRES. Positions 843 to 1939 form a coiled coil; it reads LLKSAETEKE…EVHTKVISEE (1097 aa). A phosphoserine mark is found at Ser1092, Ser1162, and Ser1237. At Thr1241 the chain carries Phosphothreonine. Ser1243 carries the phosphoserine modification. Thr1255 is modified (phosphothreonine). Ser1261 is subject to Phosphoserine. Residue Thr1265 is modified to Phosphothreonine. Ser1278 is modified (phosphoserine). At Thr1286 the chain carries Phosphothreonine. Phosphoserine is present on residues Ser1288, Ser1292, Ser1303, Ser1306, and Ser1413. Phosphotyrosine is present on Tyr1464. Phosphothreonine is present on Thr1467. Ser1474 is modified (phosphoserine). Tyr1492 carries the post-translational modification Phosphotyrosine. Residue Ser1495 is modified to Phosphoserine. Thr1501 is modified (phosphothreonine). Position 1514 is a phosphoserine (Ser1514). Thr1517 is subject to Phosphothreonine. Residues Ser1542, Ser1547, Ser1554, Ser1574, Ser1600, Ser1603, Ser1714, and Ser1726 each carry the phosphoserine modification. Phosphothreonine occurs at positions 1730 and 1736. Residue Ser1739 is modified to Phosphoserine.

It belongs to the TRAFAC class myosin-kinesin ATPase superfamily. Myosin family. As to quaternary structure, muscle myosin is a hexameric protein that consists of 2 heavy chain subunits (MHC), 2 alkali light chain subunits (MLC) and 2 regulatory light chain subunits (MLC-2).

The protein resides in the cytoplasm. Its subcellular location is the myofibril. In terms of biological role, muscle contraction. The chain is Myosin-4 (MYH4) from Homo sapiens (Human).